Consider the following 164-residue polypeptide: Telomerase-associated protein of 19 kDa (164 aa).

In terms of assembly, component of the telomerase holoenzyme complex, composed of the catalytic core (the catalytic subunit TERT, the telomerase RNA template component TER and TAP65/p65), which is associated with two heterotrimeric subcomplexes: (i) the replication protein A (RPA)-related subcomplex, composed of TEB1, RPA2/TEB2 and RPA3/TEB3 and (ii) the CST-like subcomplex, composed of TAP75/p75, TAP45/p45 and TAP19/p19. TEB1 and the CST-like subcomplex are tethered to the catalytic core by TAP50/p50.

Its subcellular location is the chromosome. The protein localises to the telomere. Its function is as follows. Component of a CST-like subcomplex of the holoenzyme telomerase ribonucleoprotein complex, which stimulates telomerase complementary-strand synthesis. Telomerase is an essential ribonucleoprotein enzyme that copies new telomeric repeats onto chromosome ends by repetitively synthesizing the short telomere-repeat sequence 5'-TTGGGG-3' using an RNA template component TER. The CST-like subcomplex (also named 7-4-1) binds telomeric single-stranded DNA and coordinates telomere G-strand and C-strand synthesis. The sequence is that of Telomerase-associated protein of 19 kDa from Tetrahymena thermophila (strain SB210).